A 126-amino-acid chain; its full sequence is Large-conductance mechanosensitive channel (126 aa).

The next 3 helical transmembrane spans lie at 14–34, 40–60, and 67–87; these read VIDLAIGVIIGGAFGKIVTSL, MPLLGLLLGGLDFSALSFTFV, and GLFIQSIVNFFIISFSIFLFI.

This sequence belongs to the MscL family. Homopentamer.

The protein resides in the cell membrane. Its function is as follows. Channel that opens in response to stretch forces in the membrane lipid bilayer. May participate in the regulation of osmotic pressure changes within the cell. This is Large-conductance mechanosensitive channel from Bacillus licheniformis (strain ATCC 14580 / DSM 13 / JCM 2505 / CCUG 7422 / NBRC 12200 / NCIMB 9375 / NCTC 10341 / NRRL NRS-1264 / Gibson 46).